Reading from the N-terminus, the 421-residue chain is Ethanolamine-phosphate cytidylyltransferase (421 aa).

The chain crosses the membrane as a helical span at residues 8–28 (IVGSCIVGGAAFAVGASFLHL). The segment at 203 to 227 (SRSSLQRQFSHGHSSPKFEDGASSA) is disordered. The segment covering 204–215 (RSSLQRQFSHGH) has biased composition (polar residues). Residues 262–263 (AF), 270–273 (HVEI), Arg-298, 346–349 (HGTV), and 377–381 (SPLDI) contribute to the CTP site. Positions 402-421 (AKKEASEKKYYEQKSFVSGD) are disordered. Over residues 403–413 (KKEASEKKYYE) the composition is skewed to basic and acidic residues. The residue at position 416 (Ser-416) is a Phosphoserine.

The protein belongs to the cytidylyltransferase family. As to expression, expressed in root tip, lateral root primordia, leaves, shoot apex, stem vascular bundles, pollen and embryos.

It localises to the mitochondrion outer membrane. It carries out the reaction phosphoethanolamine + CTP + H(+) = CDP-ethanolamine + diphosphate. It functions in the pathway phospholipid metabolism; phosphatidylethanolamine biosynthesis; phosphatidylethanolamine from ethanolamine: step 2/3. Its function is as follows. Plays an important role in the biosynthesis of the phospholipid phosphatidylethanolamine. Catalyzes the formation of CDP-ethanolamine. Essential for early embryonic development. The polypeptide is Ethanolamine-phosphate cytidylyltransferase (Arabidopsis thaliana (Mouse-ear cress)).